A 233-amino-acid chain; its full sequence is Large ribosomal subunit protein uL2 (233 aa).

The disordered stretch occupies residues 195–233 (PHGGGNHQHVGRPSTVGRNAPPGRKVGRLSPKRRRVNGR). The segment covering 219-233 (KVGRLSPKRRRVNGR) has biased composition (basic residues).

This sequence belongs to the universal ribosomal protein uL2 family. Part of the 50S ribosomal subunit. Forms a bridge to the 30S subunit in the 70S ribosome.

One of the primary rRNA binding proteins. Required for association of the 30S and 50S subunits to form the 70S ribosome, for tRNA binding and peptide bond formation. It has been suggested to have peptidyltransferase activity; this is somewhat controversial. Makes several contacts with the 16S rRNA in the 70S ribosome. The sequence is that of Large ribosomal subunit protein uL2 from Thermoplasma acidophilum (strain ATCC 25905 / DSM 1728 / JCM 9062 / NBRC 15155 / AMRC-C165).